The following is a 135-amino-acid chain: UPF0102 protein Mkms_2031 (135 aa).

The protein belongs to the UPF0102 family.

This chain is UPF0102 protein Mkms_2031, found in Mycobacterium sp. (strain KMS).